Here is a 245-residue protein sequence, read N- to C-terminus: Alanyl-tRNA editing protein AlaX-M (245 aa).

Residues His107, His111, Cys210, and His214 each contribute to the Zn(2+) site.

It belongs to the class-II aminoacyl-tRNA synthetase family. Editing domain AlaX-M subfamily. Zn(2+) is required as a cofactor.

Its subcellular location is the cytoplasm. Functionally, functions in trans to edit the amino acid moiety from mischarged charged tRNA(Ala). The sequence is that of Alanyl-tRNA editing protein AlaX-M (alaXM) from Methanosarcina acetivorans (strain ATCC 35395 / DSM 2834 / JCM 12185 / C2A).